The following is a 137-amino-acid chain: Large ribosomal subunit protein uL16 (137 aa).

The protein belongs to the universal ribosomal protein uL16 family. As to quaternary structure, part of the 50S ribosomal subunit.

Its function is as follows. Binds 23S rRNA and is also seen to make contacts with the A and possibly P site tRNAs. The sequence is that of Large ribosomal subunit protein uL16 from Anaplasma phagocytophilum (strain HZ).